The chain runs to 455 residues: Bifunctional protein GlmU (455 aa).

The tract at residues Met-1–Pro-232 is pyrophosphorylase. Residues Leu-10–Gly-13, Lys-24, Gln-75, and Gly-80–Thr-81 each bind UDP-N-acetyl-alpha-D-glucosamine. Asp-106 lines the Mg(2+) pocket. Gly-141, Glu-155, Asn-172, and Asn-230 together coordinate UDP-N-acetyl-alpha-D-glucosamine. Residue Asn-230 coordinates Mg(2+). A linker region spans residues Ala-233–Gly-253. Positions Gly-254–Ala-455 are N-acetyltransferase. Residues Arg-336 and Lys-354 each coordinate UDP-N-acetyl-alpha-D-glucosamine. His-366 (proton acceptor) is an active-site residue. UDP-N-acetyl-alpha-D-glucosamine contacts are provided by Tyr-369 and Asn-380. Residues Ala-383, Asn-389 to Tyr-390, Ser-408, Ala-426, and Arg-443 each bind acetyl-CoA.

It in the N-terminal section; belongs to the N-acetylglucosamine-1-phosphate uridyltransferase family. The protein in the C-terminal section; belongs to the transferase hexapeptide repeat family. Homotrimer. Mg(2+) is required as a cofactor.

The protein localises to the cytoplasm. The enzyme catalyses alpha-D-glucosamine 1-phosphate + acetyl-CoA = N-acetyl-alpha-D-glucosamine 1-phosphate + CoA + H(+). The catalysed reaction is N-acetyl-alpha-D-glucosamine 1-phosphate + UTP + H(+) = UDP-N-acetyl-alpha-D-glucosamine + diphosphate. It functions in the pathway nucleotide-sugar biosynthesis; UDP-N-acetyl-alpha-D-glucosamine biosynthesis; N-acetyl-alpha-D-glucosamine 1-phosphate from alpha-D-glucosamine 6-phosphate (route II): step 2/2. The protein operates within nucleotide-sugar biosynthesis; UDP-N-acetyl-alpha-D-glucosamine biosynthesis; UDP-N-acetyl-alpha-D-glucosamine from N-acetyl-alpha-D-glucosamine 1-phosphate: step 1/1. It participates in bacterial outer membrane biogenesis; LPS lipid A biosynthesis. In terms of biological role, catalyzes the last two sequential reactions in the de novo biosynthetic pathway for UDP-N-acetylglucosamine (UDP-GlcNAc). The C-terminal domain catalyzes the transfer of acetyl group from acetyl coenzyme A to glucosamine-1-phosphate (GlcN-1-P) to produce N-acetylglucosamine-1-phosphate (GlcNAc-1-P), which is converted into UDP-GlcNAc by the transfer of uridine 5-monophosphate (from uridine 5-triphosphate), a reaction catalyzed by the N-terminal domain. The chain is Bifunctional protein GlmU from Nitratidesulfovibrio vulgaris (strain ATCC 29579 / DSM 644 / CCUG 34227 / NCIMB 8303 / VKM B-1760 / Hildenborough) (Desulfovibrio vulgaris).